A 237-amino-acid polypeptide reads, in one-letter code: Cyclic-di-GMP-binding biofilm dispersal mediator protein (237 aa).

L10–R34 lines the NAD(+) pocket. S132 contacts substrate. Y146 (proton acceptor) is an active-site residue.

The protein belongs to the short-chain dehydrogenases/reductases (SDR) family.

Functionally, increases biofilm dispersal. Acts by binding directly to the signaling molecule cyclic-di-GMP, which decreases the intracellular concentration of cyclic-di-GMP and leads to biofilm dispersal. Also controls other biofilm-related phenotypes such as cell motility, cell size, cell aggregation and production of extracellular DNA and extracellular polysaccharides (EPS). Does not act as a phosphodiesterase. This Escherichia coli (strain K12) protein is Cyclic-di-GMP-binding biofilm dispersal mediator protein (bdcA).